We begin with the raw amino-acid sequence, 126 residues long: MGFWKFPPFLVLSILVLYQAGMFHTAPMRSAFGSPFDPATLSEEESRLLLAAMVNDYEQMKAREMQKQRAQGSGISVQKRSCNTATCMTHRLVGLLSRSGSMVRSNLLPTKMGFKVFGGRRRNFWI.

The N-terminal stretch at 1-25 is a signal peptide; it reads MGFWKFPPFLVLSILVLYQAGMFHT. The propeptide occupies 26 to 78; the sequence is APMRSAFGSPFDPATLSEEESRLLLAAMVNDYEQMKAREMQKQRAQGSGISVQ. Cysteine 82 and cysteine 87 are oxidised to a cystine. Glycine 118 is subject to Glycine amide. A propeptide spanning residues 123 to 126 is cleaved from the precursor; the sequence is NFWI.

In terms of tissue distribution, mainly expressed in the thyroid gland and CNS. Found in the nerve cells of cerebrum, hippocampus, hypothalamus, pons/midbrain and thalamus.

The protein resides in the secreted. Functionally, stimulates cAMP production in porcine kidney cell line LLC-PK1 via the calcitonin receptor (CT) but not via the CT-like (CL) receptor. The sequence is that of Calcitonin receptor-stimulating peptide 1 (CRSP1) from Sus scrofa (Pig).